Here is a 348-residue protein sequence, read N- to C-terminus: Short-wave-sensitive opsin 1 (348 aa).

The Extracellular portion of the chain corresponds to 1–33; that stretch reads MRKMSEEEFYLFKNISSVGPWDGPQYHIAPVWA. The N-linked (GlcNAc...) asparagine glycan is linked to Asn-14. The chain crosses the membrane as a helical span at residues 34–58; it reads FYLQAAFMGTVFLIGFPLNAMVLVA. Over 59–70 the chain is Cytoplasmic; the sequence is TLRYKKLRQPLN. A helical transmembrane segment spans residues 71–96; sequence YILVNVSFGGFLLCIFSVFPVFVASC. Residues 97-110 lie on the Extracellular side of the membrane; that stretch reads NGYFVFGRHVCALE. Cys-107 and Cys-184 are joined by a disulfide. The helical transmembrane segment at 111 to 130 threads the bilayer; it reads GFLGTVAGLVTGWSLAFLAF. At 131–149 the chain is on the cytoplasmic side; sequence ERYIVICKPFGNFRFSSKH. The chain crosses the membrane as a helical span at residues 150–173; sequence ALTVVLATWTIGIGVSIPPFFGWS. The Extracellular segment spans residues 174–199; that stretch reads RFIPEGLQCSCGPDWYTVGTKYRSES. A helical membrane pass occupies residues 200–227; sequence YTWFLFIFCFIVPLSLICFSYTQLLRAL. Over 228 to 249 the chain is Cytoplasmic; it reads KAVAAQQQESATTQKAEREVSR. The helical transmembrane segment at 250–273 threads the bilayer; sequence MVVVMVGSFCVCYVPYAAFAMYMV. Residues 274–281 lie on the Extracellular side of the membrane; that stretch reads NNRNHGLD. Residues 282–306 form a helical membrane-spanning segment; sequence LRLVTIPSFFSKSACIYNPIIYCFM. N6-(retinylidene)lysine is present on Lys-293. Over 307 to 348 the chain is Cytoplasmic; it reads NKQFQACIMKMVCGKAMTDESDTCSSQKTEVSTVSSTQVGPN.

It belongs to the G-protein coupled receptor 1 family. Opsin subfamily. In terms of processing, phosphorylated on some or all of the serine and threonine residues present in the C-terminal region.

Its subcellular location is the cell membrane. It is found in the photoreceptor inner segment. The protein localises to the cell projection. The protein resides in the cilium. It localises to the photoreceptor outer segment. Its subcellular location is the cytoplasm. It is found in the perinuclear region. In terms of biological role, visual pigments are the light-absorbing molecules that mediate vision. They consist of an apoprotein, opsin, covalently linked to cis-retinal. Required for the maintenance of cone outer segment organization in the ventral retina, but not essential for the maintenance of functioning cone photoreceptors. Involved in ensuring correct abundance and localization of retinal membrane proteins. May increase spectral sensitivity in dim light. The polypeptide is Short-wave-sensitive opsin 1 (OPN1SW) (Pan paniscus (Pygmy chimpanzee)).